The primary structure comprises 123 residues: Immunoglobulin lambda variable 5-39 (123 aa).

The first 19 residues, 1 to 19 (MAWTPLLLLLLSHCTGSLS), serve as a signal peptide directing secretion. Residues 20-44 (QPVLTQPTSLSASPGASARFTCTLR) are framework-1. Residues 21 to 123 (PVLTQPTSLS…YCAIWYSSTS (103 aa)) form the Ig-like domain. Cysteines 41 and 115 form a disulfide. A complementarity-determining-1 region spans residues 45–53 (SGINVGTYR). The segment at 54 to 70 (IYWYQQKPGSLPRYLLR) is framework-2. A complementarity-determining-2 region spans residues 71 to 77 (YKSDSDK). The segment at 78–115 (QQGSGVPSRFSGSKDASTNAGLLLISGLQSEDEADYYC) is framework-3. Residues 116 to 123 (AIWYSSTS) are complementarity-determining-3.

Immunoglobulins are composed of two identical heavy chains and two identical light chains; disulfide-linked.

The protein resides in the secreted. Its subcellular location is the cell membrane. Its function is as follows. V region of the variable domain of immunoglobulin light chains that participates in the antigen recognition. Immunoglobulins, also known as antibodies, are membrane-bound or secreted glycoproteins produced by B lymphocytes. In the recognition phase of humoral immunity, the membrane-bound immunoglobulins serve as receptors which, upon binding of a specific antigen, trigger the clonal expansion and differentiation of B lymphocytes into immunoglobulins-secreting plasma cells. Secreted immunoglobulins mediate the effector phase of humoral immunity, which results in the elimination of bound antigens. The antigen binding site is formed by the variable domain of one heavy chain, together with that of its associated light chain. Thus, each immunoglobulin has two antigen binding sites with remarkable affinity for a particular antigen. The variable domains are assembled by a process called V-(D)-J rearrangement and can then be subjected to somatic hypermutations which, after exposure to antigen and selection, allow affinity maturation for a particular antigen. This is Immunoglobulin lambda variable 5-39 from Homo sapiens (Human).